We begin with the raw amino-acid sequence, 227 residues long: YEATS domain-containing protein 4 (227 aa).

Residues 15-158 enclose the YEATS domain; that stretch reads RVKGVTIVKP…AMMQQLLTTS (144 aa). Lys37 participates in a covalent cross-link: Glycyl lysine isopeptide (Lys-Gly) (interchain with G-Cter in SUMO2). The interval 93-97 is diacetylated histone H3 binding; sequence WGEFE. Residues 163-227 form an interaction with MLLT10 region; sequence LGAYKHETEF…LEEDDQAKDI (65 aa). Residues 168-227 form an interaction with TACC1 region; it reads HETEFAELEVKTREKLEAAKKKTSFEIAELKERLKASRETINCLKNEIRKLEEDDQAKDI. The stretch at 178 to 226 forms a coiled coil; that stretch reads KTREKLEAAKKKTSFEIAELKERLKASRETINCLKNEIRKLEEDDQAKD.

Component of numerous complexes with chromatin remodeling and histone acetyltransferase activity. Component of the NuA4 histone acetyltransferase complex which contains the catalytic subunit KAT5/TIP60 and the subunits EP400, TRRAP/PAF400, BRD8/SMAP, EPC1, DMAP1/DNMAP1, RUVBL1/TIP49, RUVBL2, ING3, actin, ACTL6A/BAF53A, MORF4L1/MRG15, MORF4L2/MRGX, MRGBP, YEATS4/GAS41, VPS72/YL1 and MEAF6. The NuA4 complex interacts with MYC and the adenovirus E1A protein. Component of a NuA4-related complex which contains EP400, TRRAP/PAF400, SRCAP, BRD8/SMAP, EPC1, DMAP1/DNMAP1, RUVBL1/TIP49, RUVBL2, actin, ACTL6A/BAF53A, VPS72 and YEATS4/GAS41. Interacts with MLLT10/AF10. Also interacts with the SWI/SNF component SMARCB1/BAF47, TACC1 and TACC2, and the nuclear matrix protein NUMA1. As to expression, expressed in brain, heart, kidney, liver, lung, pancreas, placenta and skeletal muscle.

Its subcellular location is the nucleus. Functionally, chromatin reader component of the NuA4 histone acetyltransferase (HAT) complex, a complex involved in transcriptional activation of select genes principally by acetylation of nucleosomal histones H4 and H2A. Specifically recognizes and binds acylated histone H3, with a preference for histone H3 diacetylated at 'Lys-18' and 'Lys-27' (H3K18ac and H3K27ac) or histone H3 diacetylated at 'Lys-14' and 'Lys-27' (H3K14ac and H3K27ac). Also able to recognize and bind crotonylated histone H3. May also recognize and bind histone H3 succinylated at 'Lys-122' (H3K122succ); additional evidences are however required to confirm this result in vivo. Plays a key role in histone variant H2AZ1/H2A.Z deposition into specific chromatin regions: recognizes and binds H3K14ac and H3K27ac on the promoters of actively transcribed genes and recruits NuA4-related complex to deposit H2AZ1/H2A.Z. H2AZ1/H2A.Z deposition is required for maintenance of embryonic stem cell. The chain is YEATS domain-containing protein 4 from Homo sapiens (Human).